The chain runs to 77 residues: MKLMIFTGLVLFAIVSLIEAQAENEKPCLPEYKVCTHVPGNCCSDLVCDCYGRYKSGAQIGRNCFCLQKGVIYKREN.

Residues 1–20 (MKLMIFTGLVLFAIVSLIEA) form the signal peptide. Positions 21 to 26 (QAENEK) are excised as a propeptide.

Belongs to the neurotoxin 19 (CSTX) family. 08 (U8-Lctx) subfamily. Post-translationally, contains 4 disulfide bonds. Expressed by the venom gland.

It is found in the secreted. The chain is U8-lycotoxin-Ls1p from Lycosa singoriensis (Wolf spider).